Here is a 246-residue protein sequence, read N- to C-terminus: Large ribosomal subunit protein uL2 (246 aa).

The tract at residues 197-227 (SPYAHPHGGGSHQKGGTPVPKTAPPGQKVGF) is disordered.

The protein belongs to the universal ribosomal protein uL2 family. In terms of assembly, part of the 50S ribosomal subunit. Forms a bridge to the 30S subunit in the 70S ribosome.

Its function is as follows. One of the primary rRNA binding proteins. Required for association of the 30S and 50S subunits to form the 70S ribosome, for tRNA binding and peptide bond formation. It has been suggested to have peptidyltransferase activity; this is somewhat controversial. Makes several contacts with the 16S rRNA in the 70S ribosome. This is Large ribosomal subunit protein uL2 from Pyrobaculum aerophilum (strain ATCC 51768 / DSM 7523 / JCM 9630 / CIP 104966 / NBRC 100827 / IM2).